The following is a 196-amino-acid chain: Molybdenum cofactor guanylyltransferase (196 aa).

GTP is bound by residues 10–12 (LAG), Lys23, Asn51, Asp69, and Asp99. Asp99 contributes to the Mg(2+) binding site.

The protein belongs to the MobA family. As to quaternary structure, monomer. The cofactor is Mg(2+).

The protein resides in the cytoplasm. It catalyses the reaction Mo-molybdopterin + GTP + H(+) = Mo-molybdopterin guanine dinucleotide + diphosphate. Transfers a GMP moiety from GTP to Mo-molybdopterin (Mo-MPT) cofactor (Moco or molybdenum cofactor) to form Mo-molybdopterin guanine dinucleotide (Mo-MGD) cofactor. The sequence is that of Molybdenum cofactor guanylyltransferase from Shewanella amazonensis (strain ATCC BAA-1098 / SB2B).